The primary structure comprises 280 residues: Phosphatidylserine decarboxylase proenzyme (280 aa).

Active-site charge relay system; for autoendoproteolytic cleavage activity residues include D88, H145, and S249. Residue S249 is the Schiff-base intermediate with substrate; via pyruvic acid; for decarboxylase activity of the active site. S249 carries the pyruvic acid (Ser); by autocatalysis modification.

This sequence belongs to the phosphatidylserine decarboxylase family. PSD-B subfamily. Prokaryotic type I sub-subfamily. Heterodimer of a large membrane-associated beta subunit and a small pyruvoyl-containing alpha subunit. Requires pyruvate as cofactor. Post-translationally, is synthesized initially as an inactive proenzyme. Formation of the active enzyme involves a self-maturation process in which the active site pyruvoyl group is generated from an internal serine residue via an autocatalytic post-translational modification. Two non-identical subunits are generated from the proenzyme in this reaction, and the pyruvate is formed at the N-terminus of the alpha chain, which is derived from the carboxyl end of the proenzyme. The autoendoproteolytic cleavage occurs by a canonical serine protease mechanism, in which the side chain hydroxyl group of the serine supplies its oxygen atom to form the C-terminus of the beta chain, while the remainder of the serine residue undergoes an oxidative deamination to produce ammonia and the pyruvoyl prosthetic group on the alpha chain. During this reaction, the Ser that is part of the protease active site of the proenzyme becomes the pyruvoyl prosthetic group, which constitutes an essential element of the active site of the mature decarboxylase.

It localises to the cell membrane. It catalyses the reaction a 1,2-diacyl-sn-glycero-3-phospho-L-serine + H(+) = a 1,2-diacyl-sn-glycero-3-phosphoethanolamine + CO2. It functions in the pathway phospholipid metabolism; phosphatidylethanolamine biosynthesis; phosphatidylethanolamine from CDP-diacylglycerol: step 2/2. Its function is as follows. Catalyzes the formation of phosphatidylethanolamine (PtdEtn) from phosphatidylserine (PtdSer). The sequence is that of Phosphatidylserine decarboxylase proenzyme from Chromobacterium violaceum (strain ATCC 12472 / DSM 30191 / JCM 1249 / CCUG 213 / NBRC 12614 / NCIMB 9131 / NCTC 9757 / MK).